A 206-amino-acid polypeptide reads, in one-letter code: Urease accessory protein UreG (206 aa).

14–21 (GPVGSGKT) contributes to the GTP binding site.

Belongs to the SIMIBI class G3E GTPase family. UreG subfamily. In terms of assembly, homodimer. UreD, UreF and UreG form a complex that acts as a GTP-hydrolysis-dependent molecular chaperone, activating the urease apoprotein by helping to assemble the nickel containing metallocenter of UreC. The UreE protein probably delivers the nickel.

The protein localises to the cytoplasm. In terms of biological role, facilitates the functional incorporation of the urease nickel metallocenter. This process requires GTP hydrolysis, probably effectuated by UreG. This is Urease accessory protein UreG from Brucella anthropi (strain ATCC 49188 / DSM 6882 / CCUG 24695 / JCM 21032 / LMG 3331 / NBRC 15819 / NCTC 12168 / Alc 37) (Ochrobactrum anthropi).